The primary structure comprises 579 residues: Glutamine--tRNA ligase (579 aa).

The 'HIGH' region motif lies at 41–51 (PEPNGYLHIGH). ATP is bound by residues 42–44 (EPN) and 48–54 (HIGHAKA). Residues Asp74 and Tyr218 each coordinate L-glutamine. Residues Thr237, 285 to 286 (RL), and 293 to 295 (MSK) contribute to the ATP site. Residues 292 to 296 (VMSKR) carry the 'KMSKS' region motif.

Belongs to the class-I aminoacyl-tRNA synthetase family. As to quaternary structure, monomer.

It localises to the cytoplasm. The catalysed reaction is tRNA(Gln) + L-glutamine + ATP = L-glutaminyl-tRNA(Gln) + AMP + diphosphate. The polypeptide is Glutamine--tRNA ligase (Xanthomonas campestris pv. campestris (strain 8004)).